We begin with the raw amino-acid sequence, 140 residues long: Large ribosomal subunit protein bL17 (140 aa).

The protein belongs to the bacterial ribosomal protein bL17 family. In terms of assembly, part of the 50S ribosomal subunit. Contacts protein L32.

The protein is Large ribosomal subunit protein bL17 of Beijerinckia indica subsp. indica (strain ATCC 9039 / DSM 1715 / NCIMB 8712).